The primary structure comprises 126 residues: MGDYVVVLEAPIIVRDVETSEDAINVAVSKVAKALNKEKLDFVRVEIGYSQCPVCGAHFESAFVIGSVGLVGMYLTIKVYNAQTIEHAERIAKAVIGKALKKVPLKVYEIRELTEEEEGEGVEFEE.

The protein belongs to the UPF0212 family.

This is UPF0212 protein TON_0350 from Thermococcus onnurineus (strain NA1).